Here is a 267-residue protein sequence, read N- to C-terminus: Potassium channel regulatory protein (267 aa).

A BTB domain is found at 5-74; that stretch reads ELVTLNVGGK…LRTQQLLLPT (70 aa).

In terms of assembly, can form homooligomers. Interacts with KCNA1 (via cytoplasmic N-terminal domain) and KCNA4.

It localises to the endoplasmic reticulum. Functionally, inhibits potassium fluxes in cells. May regulate Kv1 family channel proteins by retaining a fraction of channels in endomembranes. The chain is Potassium channel regulatory protein (KCNRG) from Bos taurus (Bovine).